The following is a 207-amino-acid chain: Heat shock protein beta-1 (207 aa).

Residue R12 is modified to Omega-N-methylarginine. Position 13 is a phosphoserine (S13). The residue at position 15 (S15) is a Phosphoserine; by MAPKAPK2 and MAPKAPK3. Residue S27 is modified to Phosphoserine. The interaction with TGFB1I1 stretch occupies residues 72–207 (APAYSRLLSR…AGKSEKPGTK (136 aa)). The sHSP domain occupies 78-186 (LLSRQLSSGV…QSAEITIPVT (109 aa)). Residues S80 and S84 each carry the phosphoserine; by MAPKAPK2, MAPKAPK3 and MAPKAPK5 modification. Phosphoserine is present on residues S85, S88, and S100. Position 125 is an N6-acetyllysine (K125). The disordered stretch occupies residues 151-181 (DPTQVSSSLSPEGTLSVEAPLPKPATQSAEI). Over residues 153–163 (TQVSSSLSPEG) the composition is skewed to polar residues. Position 176 is a phosphothreonine (T176). A phosphoserine mark is found at S178 and S201.

The protein belongs to the small heat shock protein (HSP20) family. As to quaternary structure, homooligomer. Homodimer; becomes monomeric upon activation. Heterooligomer; with HSPB6. Associates with alpha- and beta-tubulin. Interacts with TGFB1I1. Interacts with CRYAB. Interacts with HSPB8. Interacts with HSPBAP1. In terms of processing, phosphorylated upon exposure to protein kinase C activators and heat shock. Phosphorylation by MAPKAPK2 and MAPKAPK3 in response to stress dissociates HSPB1 from large small heat-shock protein (sHsps) oligomers and impairs its chaperone activity and ability to protect against oxidative stress effectively. Phosphorylation by MAPKAPK5 in response to PKA stimulation induces F-actin rearrangement.

It localises to the cytoplasm. It is found in the nucleus. Its subcellular location is the cytoskeleton. The protein resides in the spindle. In terms of biological role, small heat shock protein which functions as a molecular chaperone probably maintaining denatured proteins in a folding-competent state. Plays a role in stress resistance and actin organization. Through its molecular chaperone activity may regulate numerous biological processes including the phosphorylation and the axonal transport of neurofilament proteins. The sequence is that of Heat shock protein beta-1 (HSPB1) from Sus scrofa (Pig).